The sequence spans 747 residues: Protein tyrosine phosphatase domain-containing protein 1 (747 aa).

The segment at 1 to 36 (MAAGVLPQNEDPYSTLVNSSGHAAHMDENSGRPAPK) is disordered. Over residues 11–21 (DPYSTLVNSSG) the composition is skewed to polar residues. The region spanning 82–253 (YSSWVTDNIL…LAPLRNIFSC (172 aa)) is the Tyrosine-protein phosphatase domain. Cys190 functions as the Phosphocysteine intermediate in the catalytic mechanism. Phosphoserine occurs at positions 392, 394, and 543. The tract at residues 549–570 (SSPKAQFPHGQETQDSTDLSEA) is disordered.

It belongs to the protein-tyrosine phosphatase family. Non-receptor class PTPDC1 subfamily.

In terms of biological role, may play roles in cilia formation and/or maintenance. This is Protein tyrosine phosphatase domain-containing protein 1 (Ptpdc1) from Mus musculus (Mouse).